We begin with the raw amino-acid sequence, 262 residues long: Small ribosomal subunit protein eS4x (262 aa).

The S4 RNA-binding domain maps to 42–104 (LPLVLIIRNR…TNENFRLLYD (63 aa)).

This sequence belongs to the eukaryotic ribosomal protein eS4 family.

The protein localises to the cytoplasm. The protein is Small ribosomal subunit protein eS4x (RPS4D) of Arabidopsis thaliana (Mouse-ear cress).